Reading from the N-terminus, the 287-residue chain is Probable ABC transporter extracellular-binding protein YckB (287 aa).

A signal peptide spans 1 to 24 (MKSFMHSKAVIFSFTMAFFLILAA). Cys-25 is lipidated: N-palmitoyl cysteine. The S-diacylglycerol cysteine moiety is linked to residue Cys-25.

The protein belongs to the bacterial solute-binding protein 3 family.

It is found in the cell membrane. Probably part of a binding-protein-dependent transport system. The sequence is that of Probable ABC transporter extracellular-binding protein YckB (yckB) from Bacillus subtilis (strain 168).